We begin with the raw amino-acid sequence, 413 residues long: Falstatin (413 aa).

Residues 1 to 21 (MNLLVFFCFFLLSCIVHLSRC) form the signal peptide. The short motif at 284-294 (LDSVNGNGFVW) is the BC loop; binds and inhibits the active site cavity of cysteine proteases element. 2 stretches are compositionally biased toward polar residues: residues 325 to 339 (ISVT…NSNT) and 346 to 360 (NNKQ…TTNH). The interval 325 to 367 (ISVTNPVPIPKNSNTNKDDSINNKQDGSQNNTTTNHFPKPREQ) is disordered.

It belongs to the protease inhibitor I71 family. In terms of assembly, oligomer; probably composed of 10 monomers. In terms of processing, proteolytically cleaved.

Its subcellular location is the secreted. The protein localises to the cytoplasmic vesicle. It localises to the secretory vesicle. It is found in the microneme. The protein resides in the parasitophorous vacuole lumen. Its subcellular location is the host cytoplasm. In terms of biological role, cysteine protease inhibitor. Inhibits cysteine protease falcipains FP2 and FP3. Required for the invasion of host erythrocytes by merozoites. In the mosquito vector, essential for the gliding motility of hemocoel sporozoites and, therefore, for salivary gland invasion and the subsequent transmission from the mosquito to the mammalian host. Required for the invasion of host hepatocytes. During the liver stage, may prevent host hepatocyte cell death likely by inhibiting host cysteine proteases. This Plasmodium falciparum (isolate 3D7) protein is Falstatin.